Reading from the N-terminus, the 451-residue chain is Trigger factor (451 aa).

Residues glycine 171 to lysine 256 enclose the PPIase FKBP-type domain.

This sequence belongs to the FKBP-type PPIase family. Tig subfamily.

The protein resides in the cytoplasm. It carries out the reaction [protein]-peptidylproline (omega=180) = [protein]-peptidylproline (omega=0). Involved in protein export. Acts as a chaperone by maintaining the newly synthesized protein in an open conformation. Functions as a peptidyl-prolyl cis-trans isomerase. This chain is Trigger factor, found in Bradyrhizobium sp. (strain ORS 278).